The chain runs to 212 residues: Probable transaldolase (212 aa).

Lys-84 serves as the catalytic Schiff-base intermediate with substrate.

It belongs to the transaldolase family. Type 3B subfamily.

It localises to the cytoplasm. The enzyme catalyses D-sedoheptulose 7-phosphate + D-glyceraldehyde 3-phosphate = D-erythrose 4-phosphate + beta-D-fructose 6-phosphate. Its pathway is carbohydrate degradation; pentose phosphate pathway; D-glyceraldehyde 3-phosphate and beta-D-fructose 6-phosphate from D-ribose 5-phosphate and D-xylulose 5-phosphate (non-oxidative stage): step 2/3. Functionally, transaldolase is important for the balance of metabolites in the pentose-phosphate pathway. This is Probable transaldolase from Bacillus velezensis (strain DSM 23117 / BGSC 10A6 / LMG 26770 / FZB42) (Bacillus amyloliquefaciens subsp. plantarum).